Consider the following 290-residue polypeptide: OTU domain-containing protein 6A (290 aa).

Residues 27-117 are disordered; it reads QTLKASVPKN…RRHQERMPAA (91 aa). Positions 49-68 are enriched in basic and acidic residues; the sequence is SRLEAEMEQRHKQELEKFGE. The span at 95 to 108 shows a compositional bias: basic residues; the sequence is KAQKRRDRRAHQER. Residues 142–276 form the OTU domain; that stretch reads LEMKTIPADG…GEHYNSVKPI (135 aa). The cys-loop stretch occupies residues 147–153; the sequence is IPADGHC. D150 is an active-site residue. Residue C153 is the Nucleophile of the active site. A variable-loop region spans residues 211-221; that stretch reads IVHNASWGGQL. The tract at residues 259–269 is his-loop; that stretch reads YLHYACDFGEH. H269 is an active-site residue.

It carries out the reaction Thiol-dependent hydrolysis of ester, thioester, amide, peptide and isopeptide bonds formed by the C-terminal Gly of ubiquitin (a 76-residue protein attached to proteins as an intracellular targeting signal).. In terms of biological role, deubiquitinating enzyme that hydrolyzes 'Lys-27'-, 'Lys-29'- and 'Lys-33'-linked polyubiquitin chains. Also able to hydrolyze 'Lys-11'-linked ubiquitin chains. This Mus musculus (Mouse) protein is OTU domain-containing protein 6A (Otud6a).